The chain runs to 183 residues: UPF0397 protein VFMJ11_1662 (183 aa).

5 consecutive transmembrane segments (helical) span residues 8–28 (VVVI…MFGI), 41–61 (AVLA…VGFI), 75–95 (WLTW…FPII), 110–130 (FLIF…TSAF), and 147–167 (LCII…FILN).

The protein belongs to the UPF0397 family.

It is found in the cell membrane. This Aliivibrio fischeri (strain MJ11) (Vibrio fischeri) protein is UPF0397 protein VFMJ11_1662.